The chain runs to 544 residues: Chaperonin GroEL (544 aa).

ATP-binding positions include 30-33 (TLGP), K51, 87-91 (DGTTT), G415, 479-481 (NAA), and D495.

It belongs to the chaperonin (HSP60) family. In terms of assembly, forms a cylinder of 14 subunits composed of two heptameric rings stacked back-to-back. Interacts with the co-chaperonin GroES.

The protein localises to the cytoplasm. The catalysed reaction is ATP + H2O + a folded polypeptide = ADP + phosphate + an unfolded polypeptide.. In terms of biological role, together with its co-chaperonin GroES, plays an essential role in assisting protein folding. The GroEL-GroES system forms a nano-cage that allows encapsulation of the non-native substrate proteins and provides a physical environment optimized to promote and accelerate protein folding. This is Chaperonin GroEL from Francisella tularensis subsp. tularensis (strain SCHU S4 / Schu 4).